The following is a 417-amino-acid chain: Serine hydroxymethyltransferase (417 aa).

Residue Lys-54 is modified to N6-acetyllysine. Residues Leu-121 and 125 to 127 (GHL) contribute to the (6S)-5,6,7,8-tetrahydrofolate site. Lys-229 is modified (N6-(pyridoxal phosphate)lysine). N6-acetyllysine is present on residues Lys-250, Lys-285, and Lys-354. 355–357 (SPF) is a binding site for (6S)-5,6,7,8-tetrahydrofolate. Lys-375 carries the N6-acetyllysine modification.

It belongs to the SHMT family. In terms of assembly, homodimer. Pyridoxal 5'-phosphate is required as a cofactor.

It localises to the cytoplasm. The catalysed reaction is (6R)-5,10-methylene-5,6,7,8-tetrahydrofolate + glycine + H2O = (6S)-5,6,7,8-tetrahydrofolate + L-serine. It functions in the pathway one-carbon metabolism; tetrahydrofolate interconversion. It participates in amino-acid biosynthesis; glycine biosynthesis; glycine from L-serine: step 1/1. In terms of biological role, catalyzes the reversible interconversion of serine and glycine with tetrahydrofolate (THF) serving as the one-carbon carrier. This reaction serves as the major source of one-carbon groups required for the biosynthesis of purines, thymidylate, methionine, and other important biomolecules. Also exhibits THF-independent aldolase activity toward beta-hydroxyamino acids, producing glycine and aldehydes, via a retro-aldol mechanism. In Escherichia coli O1:K1 / APEC, this protein is Serine hydroxymethyltransferase.